Here is a 369-residue protein sequence, read N- to C-terminus: Anhydro-N-acetylmuramic acid kinase (369 aa).

12–19 (GTSMDGVD) contributes to the ATP binding site.

The protein belongs to the anhydro-N-acetylmuramic acid kinase family.

It carries out the reaction 1,6-anhydro-N-acetyl-beta-muramate + ATP + H2O = N-acetyl-D-muramate 6-phosphate + ADP + H(+). It participates in amino-sugar metabolism; 1,6-anhydro-N-acetylmuramate degradation. The protein operates within cell wall biogenesis; peptidoglycan recycling. Its function is as follows. Catalyzes the specific phosphorylation of 1,6-anhydro-N-acetylmuramic acid (anhMurNAc) with the simultaneous cleavage of the 1,6-anhydro ring, generating MurNAc-6-P. Is required for the utilization of anhMurNAc either imported from the medium or derived from its own cell wall murein, and thus plays a role in cell wall recycling. The protein is Anhydro-N-acetylmuramic acid kinase of Shewanella amazonensis (strain ATCC BAA-1098 / SB2B).